The primary structure comprises 263 residues: Ribonuclease HII (263 aa).

Residues Q71–N262 form the RNase H type-2 domain. A divalent metal cation-binding residues include D77, E78, and D172.

It belongs to the RNase HII family. Requires Mn(2+) as cofactor. It depends on Mg(2+) as a cofactor.

The protein localises to the cytoplasm. The catalysed reaction is Endonucleolytic cleavage to 5'-phosphomonoester.. Its function is as follows. Endonuclease that specifically degrades the RNA of RNA-DNA hybrids. The polypeptide is Ribonuclease HII (Streptococcus pyogenes serotype M4 (strain MGAS10750)).